A 201-amino-acid polypeptide reads, in one-letter code: MSGKSLLLKVILLGDGGVGKSSLMNRYVTNKFDSQAFHTIGVEFLNRDLEVDGRFVTLQIWDTAGQERFKSLRTPFYRGADCCLLTFSVDDRQSFENLGNWQKEFIYYADVKDPDHFPFVVLGNKVDKEDRQVTTEEAQAWCMENGNYPYLETSAKDDTNVTVAFEEAVRQVLAVEEQLEHCMLGHTIDLNSGSKASSSCC.

The GTP site is built by Val-18, Gly-19, Lys-20, Ser-21, Ser-22, Asp-33, Ser-34, Ala-36, His-38, and Thr-39. Position 21 (Ser-21) interacts with Mg(2+). A Switch 1 motif is present at residues 31 to 42 (KFDSQAFHTIGV). Ser-34 is subject to Phosphoserine. The Mg(2+) site is built by Thr-39 and Asp-62. The Switch 2 signature appears at 64 to 78 (AGQERFKSLRTPFYR). GTP contacts are provided by Gly-65, Asn-124, Lys-125, Ala-155, and Lys-156. 2 S-geranylgeranyl cysteine lipidation sites follow: Cys-200 and Cys-201.

This sequence belongs to the small GTPase superfamily. Rab family. Interacts (GTP-bound form) with SGSM1; the GDP-bound form has much lower affinity for SGSM1. The GTP-bound form but not the GDP-bound form interacts with HPS4 and the BLOC-3 complex (heterodimer of HPS1 and HPS4) but does not interact with HPS1 alone. Interacts (GTP-bound form) with NDE1. The cofactor is Mg(2+).

It localises to the cell membrane. The protein localises to the cytoplasmic vesicle. The protein resides in the phagosome membrane. The catalysed reaction is GTP + H2O = GDP + phosphate + H(+). Its activity is regulated as follows. Regulated by guanine nucleotide exchange factors (GEFs) which promote the exchange of bound GDP for free GTP. Regulated by GTPase activating proteins (GAPs) which increase the GTP hydrolysis activity. Inhibited by GDP dissociation inhibitors (GDIs). Functionally, the small GTPases Rab are key regulators of intracellular membrane trafficking, from the formation of transport vesicles to their fusion with membranes. Rabs cycle between an inactive GDP-bound form and an active GTP-bound form that is able to recruit to membranes different sets of downstream effectors directly responsible for vesicle formation, movement, tethering and fusion. RAB9B is involved in the transport of proteins between the endosomes and the trans Golgi network. May use NDE1/NDEL1 as an effector to interact with the dynein motor complex in order to control retrograde trafficking of RAB9-associated late endosomes to the TGN. This Mus musculus (Mouse) protein is Ras-related protein Rab-9B.